The sequence spans 714 residues: Phosphoribosylformylglycinamidine synthase subunit PurL (714 aa).

H34 is a catalytic residue. Position 37 (Y37) interacts with ATP. E78 serves as a coordination point for Mg(2+). Substrate contacts are provided by residues 79-82 and R101; that span reads SHNH. Residue H80 is the Proton acceptor of the active site. D102 lines the Mg(2+) pocket. Q226 provides a ligand contact to substrate. D254 lines the Mg(2+) pocket. 298–300 lines the substrate pocket; sequence ESQ. ATP-binding residues include D474 and G511. Residue N512 coordinates Mg(2+). Substrate is bound at residue S514.

Belongs to the FGAMS family. As to quaternary structure, monomer. Part of the FGAM synthase complex composed of 1 PurL, 1 PurQ and 2 PurS subunits.

The protein resides in the cytoplasm. The catalysed reaction is N(2)-formyl-N(1)-(5-phospho-beta-D-ribosyl)glycinamide + L-glutamine + ATP + H2O = 2-formamido-N(1)-(5-O-phospho-beta-D-ribosyl)acetamidine + L-glutamate + ADP + phosphate + H(+). It participates in purine metabolism; IMP biosynthesis via de novo pathway; 5-amino-1-(5-phospho-D-ribosyl)imidazole from N(2)-formyl-N(1)-(5-phospho-D-ribosyl)glycinamide: step 1/2. Functionally, part of the phosphoribosylformylglycinamidine synthase complex involved in the purines biosynthetic pathway. Catalyzes the ATP-dependent conversion of formylglycinamide ribonucleotide (FGAR) and glutamine to yield formylglycinamidine ribonucleotide (FGAM) and glutamate. The FGAM synthase complex is composed of three subunits. PurQ produces an ammonia molecule by converting glutamine to glutamate. PurL transfers the ammonia molecule to FGAR to form FGAM in an ATP-dependent manner. PurS interacts with PurQ and PurL and is thought to assist in the transfer of the ammonia molecule from PurQ to PurL. This chain is Phosphoribosylformylglycinamidine synthase subunit PurL, found in Methanothermobacter thermautotrophicus (strain ATCC 29096 / DSM 1053 / JCM 10044 / NBRC 100330 / Delta H) (Methanobacterium thermoautotrophicum).